A 127-amino-acid chain; its full sequence is Large ribosomal subunit protein bL19 (127 aa).

It belongs to the bacterial ribosomal protein bL19 family.

This protein is located at the 30S-50S ribosomal subunit interface and may play a role in the structure and function of the aminoacyl-tRNA binding site. The polypeptide is Large ribosomal subunit protein bL19 (Ruegeria pomeroyi (strain ATCC 700808 / DSM 15171 / DSS-3) (Silicibacter pomeroyi)).